Reading from the N-terminus, the 255-residue chain is MSFYVVIPARYASTRLPAKPLKDIAGKPMIQHVYERASQSQAKAVIIATDDARIQAVAQAFGAQVVMTSASHSSGTDRLQEVTRTLGLAADDIVVNVQGDEPLIPPAVINQVATNLAANTYASVATLSEPIHYLEDFHNPNIVKVVADKAGRALYFSRAPIPWPRDHFAKPDVNVLPDNFPAQRHIGIYSYRVALLDRFVTWPQATLESIESLEQLRVLANSEAIHVAEACAQVPGGVDTEADLQRVKALLEVGQ.

The protein belongs to the KdsB family.

The protein localises to the cytoplasm. It catalyses the reaction 3-deoxy-alpha-D-manno-oct-2-ulosonate + CTP = CMP-3-deoxy-beta-D-manno-octulosonate + diphosphate. It participates in nucleotide-sugar biosynthesis; CMP-3-deoxy-D-manno-octulosonate biosynthesis; CMP-3-deoxy-D-manno-octulosonate from 3-deoxy-D-manno-octulosonate and CTP: step 1/1. The protein operates within bacterial outer membrane biogenesis; lipopolysaccharide biosynthesis. Functionally, activates KDO (a required 8-carbon sugar) for incorporation into bacterial lipopolysaccharide in Gram-negative bacteria. The sequence is that of 3-deoxy-manno-octulosonate cytidylyltransferase from Cellvibrio japonicus (strain Ueda107) (Pseudomonas fluorescens subsp. cellulosa).